The primary structure comprises 434 residues: Enolase (434 aa).

Residue glutamine 163 coordinates (2R)-2-phosphoglycerate. The Proton donor role is filled by glutamate 205. Mg(2+)-binding residues include aspartate 242, glutamate 291, and aspartate 318. Lysine 343, arginine 372, serine 373, and lysine 394 together coordinate (2R)-2-phosphoglycerate. The active-site Proton acceptor is lysine 343.

It belongs to the enolase family. Mg(2+) serves as cofactor.

It is found in the cytoplasm. Its subcellular location is the secreted. The protein localises to the cell surface. The enzyme catalyses (2R)-2-phosphoglycerate = phosphoenolpyruvate + H2O. It functions in the pathway carbohydrate degradation; glycolysis; pyruvate from D-glyceraldehyde 3-phosphate: step 4/5. Catalyzes the reversible conversion of 2-phosphoglycerate (2-PG) into phosphoenolpyruvate (PEP). It is essential for the degradation of carbohydrates via glycolysis. The sequence is that of Enolase from Streptococcus thermophilus (strain CNRZ 1066).